The primary structure comprises 393 residues: Translation initiation factor eIF2B subunit beta (393 aa).

A disordered region spans residues Val105–Leu125. A phosphoserine mark is found at Ser106, Ser108, and Ser112.

It belongs to the eIF-2B alpha/beta/delta subunits family. As to quaternary structure, component of the translation initiation factor 2B (eIF2B) complex which is a heterodecamer of two sets of five different subunits: alpha, beta, gamma, delta and epsilon. Subunits alpha, beta and delta comprise a regulatory subcomplex and subunits epsilon and gamma comprise a catalytic subcomplex. Within the complex, the hexameric regulatory complex resides at the center, with the two heterodimeric catalytic subcomplexes bound on opposite sides.

Its subcellular location is the cytoplasm. It is found in the cytosol. Functionally, acts as a component of the translation initiation factor 2B (eIF2B) complex, which catalyzes the exchange of GDP for GTP on the eukaryotic initiation factor 2 (eIF2) complex gamma subunit. Its guanine nucleotide exchange factor activity is repressed when bound to eIF2 complex phosphorylated on the alpha subunit, thereby limiting the amount of methionyl-initiator methionine tRNA available to the ribosome and consequently global translation is repressed. The sequence is that of Translation initiation factor eIF2B subunit beta (tif222) from Schizosaccharomyces pombe (strain 972 / ATCC 24843) (Fission yeast).